We begin with the raw amino-acid sequence, 367 residues long: 4-hydroxy-3-methylbut-2-en-1-yl diphosphate synthase (flavodoxin) (367 aa).

Cysteine 265, cysteine 268, cysteine 300, and glutamate 307 together coordinate [4Fe-4S] cluster.

It belongs to the IspG family. [4Fe-4S] cluster serves as cofactor.

The catalysed reaction is (2E)-4-hydroxy-3-methylbut-2-enyl diphosphate + oxidized [flavodoxin] + H2O + 2 H(+) = 2-C-methyl-D-erythritol 2,4-cyclic diphosphate + reduced [flavodoxin]. It participates in isoprenoid biosynthesis; isopentenyl diphosphate biosynthesis via DXP pathway; isopentenyl diphosphate from 1-deoxy-D-xylulose 5-phosphate: step 5/6. Functionally, converts 2C-methyl-D-erythritol 2,4-cyclodiphosphate (ME-2,4cPP) into 1-hydroxy-2-methyl-2-(E)-butenyl 4-diphosphate. The protein is 4-hydroxy-3-methylbut-2-en-1-yl diphosphate synthase (flavodoxin) of Bacillus cereus (strain ATCC 10987 / NRS 248).